We begin with the raw amino-acid sequence, 224 residues long: Ribonuclease 3 (224 aa).

One can recognise an RNase III domain in the interval 4–127; sequence IEKLERSLTY…IIGAIHLEAG (124 aa). Glutamate 40 contributes to the Mg(2+) binding site. Aspartate 44 is an active-site residue. The Mg(2+) site is built by aspartate 113 and glutamate 116. Residue glutamate 116 is part of the active site. A DRBM domain is found at 154–223; that stretch reads DYKTKLQEIT…AKIALEKLGA (70 aa).

Belongs to the ribonuclease III family. As to quaternary structure, homodimer. Mg(2+) serves as cofactor.

It is found in the cytoplasm. The catalysed reaction is Endonucleolytic cleavage to 5'-phosphomonoester.. Its function is as follows. Digests double-stranded RNA. Involved in the processing of primary rRNA transcript to yield the immediate precursors to the large and small rRNAs (23S and 16S). Processes some mRNAs, and tRNAs when they are encoded in the rRNA operon. Processes pre-crRNA and tracrRNA of type II CRISPR loci if present in the organism. This chain is Ribonuclease 3, found in Campylobacter jejuni (strain RM1221).